Here is a 538-residue protein sequence, read N- to C-terminus: Acetylcholine receptor subunit alpha-type acr-7 (538 aa).

Positions 1–27 are cleaved as a signal peptide; the sequence is MMVQSIQIVLPVALFFLIVFNGFTVEG. Residues 28–250 lie on the Extracellular side of the membrane; sequence SKKEAQLYRD…LHLRRRTFYY (223 aa). Residues N41 and N101 are each glycosylated (N-linked (GlcNAc...) asparagine). 2 disulfides stabilise this stretch: C160–C174 and C229–C230. 3 helical membrane-spanning segments follow: residues 251–271, 280–300, and 313–333; these read VFNV…AFCL, IGLQ…LSEM, and VFFS…ILVL. Topologically, residues 334–513 are cytoplasmic; the sequence is NIRYRQITNH…FAAQAVDRFC (180 aa). Residues 514-534 traverse the membrane as a helical segment; that stretch reads LIIFTIVFIICCFIFVAIPPI.

Belongs to the ligand-gated ion channel (TC 1.A.9) family. Acetylcholine receptor (TC 1.A.9.1) subfamily. As to quaternary structure, forms a homooligomeric channel blocked by alpha-bungarotoxin. The structure is probably pentameric.

It localises to the postsynaptic cell membrane. The protein localises to the cell membrane. Its function is as follows. After binding acetylcholine, the AChR responds by an extensive change in conformation that affects all subunits and leads to opening of an ion-conducting channel across the plasma membrane. The chain is Acetylcholine receptor subunit alpha-type acr-7 (acr-7) from Caenorhabditis elegans.